The following is a 3140-amino-acid chain: Genome polyprotein (3140 aa).

The region spanning 165–308 (RMSEASLQLF…KEQSNEIVHY (144 aa)) is the Peptidase S30 domain. Catalysis depends on for P1 proteinase activity residues His216, Asp225, and Ser259. An Involved in interaction with stylet and aphid transmission motif is present at residues 360-363 (KITC). Residues 618–620 (PTK) carry the Involved in virions binding and aphid transmission motif. Residues 644-766 (MFIAKAGYCY…DSSMKTYLVG (123 aa)) form the Peptidase C6 domain. Active-site for helper component proteinase activity residues include Cys652 and His725. Residues 1240-1392 (EVMHGSHQDI…TQKEVKVIVE (153 aa)) form the Helicase ATP-binding domain. Residue 1253 to 1260 (GAVGSGKS) coordinates ATP. The short motif at 1342-1345 (DECH) is the DECH box element. In terms of domain architecture, Helicase C-terminal spans 1411–1570 (DILKHGVNVL…GLPVMTNGVS (160 aa)). Residues 1897–1904 (KKGKSKGK) carry the Nuclear localization signal motif. At Tyr1919 the chain carries O-(5'-phospho-RNA)-tyrosine. One can recognise a Peptidase C4 domain in the interval 2050-2268 (SKSLFRGLRD…VCWGSLELKR (219 aa)). Residues His2095, Asp2130, and Cys2200 each act as for nuclear inclusion protein A activity in the active site. Positions 2534-2658 (WIYCDADGSQ…AVHPAYESMY (125 aa)) constitute a RdRp catalytic domain. Positions 2883–2905 (GVYGNEDASPSTSNTLVNTGRDR) are disordered. The segment covering 2890 to 2900 (ASPSTSNTLVN) has biased composition (polar residues). A phosphoserine mark is found at Ser2891, Ser2911, and Ser2928. Residues Thr3064 and Thr3123 each carry the phosphothreonine modification.

The protein belongs to the potyviridae genome polyprotein family. As to quaternary structure, interacts with host eIF4E protein (via cap-binding region); this interaction mediates the translation of the VPg-viral RNA conjugates. Part of a complex that comprises VPg, RNA, host EIF4E and EIF4G; this interaction mediates the translation of the VPg-viral RNA conjugates. Post-translationally, VPg is uridylylated by the polymerase and is covalently attached to the 5'-end of the genomic RNA. This uridylylated form acts as a nucleotide-peptide primer for the polymerase. Potyviral RNA is expressed as two polyproteins which undergo post-translational proteolytic processing. Genome polyprotein is processed by NIa-pro, P1 and HC-pro proteinases resulting in the production of at least ten individual proteins. P3N-PIPO polyprotein is cleaved by P1 and HC-pro proteinases resulting in the production of three individual proteins. The P1 proteinase and the HC-pro cleave only their respective C-termini autocatalytically. 6K1 is essential for proper proteolytic separation of P3 from CI.

Its subcellular location is the host cytoplasmic vesicle. It localises to the host nucleus. The protein resides in the virion. The catalysed reaction is RNA(n) + a ribonucleoside 5'-triphosphate = RNA(n+1) + diphosphate. It catalyses the reaction Hydrolyzes glutaminyl bonds, and activity is further restricted by preferences for the amino acids in P6 - P1' that vary with the species of potyvirus, e.g. Glu-Xaa-Xaa-Tyr-Xaa-Gln-|-(Ser or Gly) for the enzyme from tobacco etch virus. The natural substrate is the viral polyprotein, but other proteins and oligopeptides containing the appropriate consensus sequence are also cleaved.. It carries out the reaction Hydrolyzes a Gly-|-Gly bond at its own C-terminus, commonly in the sequence -Tyr-Xaa-Val-Gly-|-Gly, in the processing of the potyviral polyprotein.. Required for aphid transmission and also has proteolytic activity. Only cleaves a Gly-Gly dipeptide at its own C-terminus. Interacts with virions and aphid stylets. Acts as a suppressor of RNA-mediated gene silencing, also known as post-transcriptional gene silencing (PTGS), a mechanism of plant viral defense that limits the accumulation of viral RNAs. May have RNA-binding activity. In terms of biological role, has helicase activity. It may be involved in replication. Its function is as follows. Indispensable for virus replication. Reduces the abundance of host transcripts related to jasmonic acid biosynthesis therefore altering the host defenses. In order to increase its own stability, decreases host protein degradation pathways. Functionally, indispensable for virus replication. Mediates the cap-independent, EIF4E-dependent translation of viral genomic RNAs. Binds to the cap-binding site of host EIF4E and thus interferes with the host EIF4E-dependent mRNA export and translation. VPg-RNA directly binds EIF4E and is a template for transcription. Also forms trimeric complexes with EIF4E-EIF4G, which are templates for translation. In terms of biological role, has RNA-binding and proteolytic activities. Its function is as follows. An RNA-dependent RNA polymerase that plays an essential role in the virus replication. Functionally, involved in aphid transmission, cell-to-cell and systemis movement, encapsidation of the viral RNA and in the regulation of viral RNA amplification. This Prunus armeniaca (Apricot) protein is Genome polyprotein.